Consider the following 726-residue polypeptide: Ribonuclease R (726 aa).

Positions 264 to 592 (RKDLTELAFV…TVHRLLWMNL (329 aa)) constitute an RNB domain. Residues 645-726 (GQTFHGFISA…VQKRAILTLV (82 aa)) enclose the S1 motif domain.

The protein belongs to the RNR ribonuclease family. RNase R subfamily.

Its subcellular location is the cytoplasm. It catalyses the reaction Exonucleolytic cleavage in the 3'- to 5'-direction to yield nucleoside 5'-phosphates.. In terms of biological role, 3'-5' exoribonuclease that releases 5'-nucleoside monophosphates and is involved in maturation of structured RNAs. The chain is Ribonuclease R from Mycoplasma pneumoniae (strain ATCC 29342 / M129 / Subtype 1) (Mycoplasmoides pneumoniae).